Consider the following 168-residue polypeptide: Photosystem I assembly protein Ycf3 (168 aa).

3 TPR repeats span residues 35-68, 72-105, and 120-153; these read AFTY…EIDP, SYIL…NPFL, and GEQA…TPGN.

It belongs to the Ycf3 family.

It is found in the plastid. Its subcellular location is the chloroplast thylakoid membrane. Essential for the assembly of the photosystem I (PSI) complex. May act as a chaperone-like factor to guide the assembly of the PSI subunits. The protein is Photosystem I assembly protein Ycf3 of Lemna minor (Common duckweed).